We begin with the raw amino-acid sequence, 220 residues long: Glutamine amidotransferase-like class 1 domain-containing protein 1 (220 aa).

Positions 1–35 are cleaved as a signal peptide; that stretch reads MASERLPSRPACLLVASGAAEGVSAQSFLHCFTLA. N-linked (GlcNAc...) asparagine glycans are attached at residues Asn-57 and Asn-201.

It belongs to the peptidase C56 family. Homotetramer. Component of the FERRY complex composed of five subunits, TBCK, PPP1R21, FERRY3, CRYZL1 and GATD1 with a ratio of 1:2:1:2:4, respectively.

It localises to the secreted. The protein resides in the early endosome. Its function is as follows. Component of the FERRY complex (Five-subunit Endosomal Rab5 and RNA/ribosome intermediary). The FERRY complex directly interacts with mRNAs and RAB5A, and functions as a RAB5A effector involved in the localization and the distribution of specific mRNAs most likely by mediating their endosomal transport. The complex recruits mRNAs and ribosomes to early endosomes through direct mRNA-interaction. This chain is Glutamine amidotransferase-like class 1 domain-containing protein 1, found in Bos taurus (Bovine).